A 192-amino-acid chain; its full sequence is MENQLFQLKFTSKQLEKQSKKSEQSEKAQKIKLKKAIEQGNMDGARIYAQNAIREKNQSLNYLRLASRIDAVASRVETAIRMKSVTGSMANIVKSMEKSMRNMDLEKITQVMDQFERQFEDLDVQSVYVENAMNQTTTLSTPADQVDLLISQVADEHGLNVGMQMGSAPSEKVQQGETDELTERLNRLKQKN.

Coiled-coil stretches lie at residues 7 to 35 (QLKF…KLKK) and 102 to 125 (NMDL…LDVQ). A disordered region spans residues 164-192 (QMGSAPSEKVQQGETDELTERLNRLKQKN).

Belongs to the SNF7 family. In terms of assembly, probable peripherally associated component of the endosomal sorting required for transport complex III (ESCRT-III).

The protein resides in the endosome membrane. Functionally, probable peripherally associated component of the endosomal sorting required for transport complex III (ESCRT-III) which is involved in multivesicular bodies (MVBs) formation and sorting of endosomal cargo proteins into MVBs. MVBs contain intraluminal vesicles (ILVs) that are generated by invagination and scission from the limiting membrane of the endosome and are delivered to lysosomes enabling degradation of membrane proteins. This Dictyostelium discoideum (Social amoeba) protein is Charged multivesicular body protein 1 (chmp1).